The primary structure comprises 207 residues: MARYLGPKAKLSRREGTDLFLKSARRSIADKAKFDSKPGQHGRTSGARTSDYGLQLREKQKVKRMYGVLEKQFRRYFEAAERLKGNTGANLLGLLECRLDNVVYRMGFGSTRAEARQLVSHKAITVNGQSVNIASYLVKAGDVVAVREKSKKQARIVEALQLAQQVGMPVWVEVNADKVEGTFKKVPDRDEFGADINESLIVELYSR.

Residues Lys-31–Gly-53 are disordered. Residues Cys-97 to Val-157 enclose the S4 RNA-binding domain.

The protein belongs to the universal ribosomal protein uS4 family. As to quaternary structure, part of the 30S ribosomal subunit. Contacts protein S5. The interaction surface between S4 and S5 is involved in control of translational fidelity.

In terms of biological role, one of the primary rRNA binding proteins, it binds directly to 16S rRNA where it nucleates assembly of the body of the 30S subunit. Its function is as follows. With S5 and S12 plays an important role in translational accuracy. The polypeptide is Small ribosomal subunit protein uS4 (Acidovorax ebreus (strain TPSY) (Diaphorobacter sp. (strain TPSY))).